Consider the following 55-residue polypeptide: Large ribosomal subunit protein uL30 (55 aa).

It belongs to the universal ribosomal protein uL30 family. In terms of assembly, part of the 50S ribosomal subunit.

Functionally, binds the 5S and 23S rRNAs. The polypeptide is Large ribosomal subunit protein uL30 (Deinococcus radiodurans (strain ATCC 13939 / DSM 20539 / JCM 16871 / CCUG 27074 / LMG 4051 / NBRC 15346 / NCIMB 9279 / VKM B-1422 / R1)).